Consider the following 394-residue polypeptide: Fatty acid resistance protein FarA (394 aa).

The disordered stretch occupies residues 1–23; that stretch reads MKSGNSEPNLMETHTDETKLQNT. Residues 33–53 form a helical membrane-spanning segment; the sequence is ALTLLFALSAAAAGSAFFLWW. Positions 356–376 are disordered; the sequence is SAAGAPVSKTPGAALPEMEST.

This sequence belongs to the membrane fusion protein (MFP) (TC 8.A.1) family. In terms of assembly, probably part of a tripartite efflux system FarAB-MtrE, which is composed of an inner membrane transporter, FarB, a periplasmic membrane fusion protein, FarA, and an outer membrane component, MtrE.

The protein localises to the cell inner membrane. In terms of biological role, mediates resistance to long-chained antibacterial fatty acids (FAs). Function is dependent on the MtrE outer membrane protein. In Neisseria gonorrhoeae, this protein is Fatty acid resistance protein FarA.